The primary structure comprises 166 residues: Small ribosomal subunit protein uS3m (166 aa).

A mitochondrion-targeting transit peptide spans 1-25 (MLRSLQHVESHINQCRRISTTSTLL).

This sequence belongs to the universal ribosomal protein uS3 family. Component of the mitochondrial ribosome small subunit (28S) which comprises a 12S rRNA and about 30 distinct proteins.

The protein resides in the mitochondrion. In Caenorhabditis briggsae, this protein is Small ribosomal subunit protein uS3m (mrps-24).